The chain runs to 264 residues: 3-methyl-2-oxobutanoate hydroxymethyltransferase (264 aa).

Mg(2+)-binding residues include aspartate 45 and aspartate 84. 3-methyl-2-oxobutanoate-binding positions include 45-46 (DS), aspartate 84, and lysine 112. Residue glutamate 114 coordinates Mg(2+). Glutamate 181 serves as the catalytic Proton acceptor.

Belongs to the PanB family. As to quaternary structure, homodecamer; pentamer of dimers. Mg(2+) is required as a cofactor.

The protein localises to the cytoplasm. It catalyses the reaction 3-methyl-2-oxobutanoate + (6R)-5,10-methylene-5,6,7,8-tetrahydrofolate + H2O = 2-dehydropantoate + (6S)-5,6,7,8-tetrahydrofolate. It participates in cofactor biosynthesis; (R)-pantothenate biosynthesis; (R)-pantoate from 3-methyl-2-oxobutanoate: step 1/2. In terms of biological role, catalyzes the reversible reaction in which hydroxymethyl group from 5,10-methylenetetrahydrofolate is transferred onto alpha-ketoisovalerate to form ketopantoate. The polypeptide is 3-methyl-2-oxobutanoate hydroxymethyltransferase (Escherichia coli O127:H6 (strain E2348/69 / EPEC)).